Consider the following 275-residue polypeptide: Large ribosomal subunit protein uL2c (275 aa).

Residues 225 to 249 (PVDHPHGGGEGRAPIGRKKPTTPWG) form a disordered region.

Belongs to the universal ribosomal protein uL2 family. Part of the 50S ribosomal subunit.

The protein resides in the plastid. The sequence is that of Large ribosomal subunit protein uL2c (rpl2) from Cuscuta reflexa (Southern Asian dodder).